Reading from the N-terminus, the 423-residue chain is Protein TylM3 (423 aa).

The segment covering 1–21 (MNTAAGPTGTAAGGTTAPAAA) has biased composition (low complexity). Disordered stretches follow at residues 1–26 (MNTA…DLSR) and 117–149 (GSAL…RDDP). Positions 139-149 (RPPDREERDDP) are enriched in basic and acidic residues.

Belongs to the cytochrome P450 family.

Its pathway is antibiotic biosynthesis; tylosin biosynthesis. Functionally, involved in the biosynthesis of the macrolide antibiotic tylosin derived from the polyketide lactone tylactone. TylM3 is required for the glycosylation of the 5-hydroxyl group of tylactone to yield 5-O-mycaminosytylactone. In Streptomyces fradiae (Streptomyces roseoflavus), this protein is Protein TylM3.